Here is a 529-residue protein sequence, read N- to C-terminus: FAD-binding monooxygenase BOA2 (529 aa).

Residues 58-61 (VWWK), 70-71 (DI), and Tyr-76 contribute to the FAD site. Residue 68–70 (ACD) coordinates NADP(+). Residues 198–204 (TGPSACQ) and 221–222 (RS) contribute to the NADP(+) site.

It belongs to the FAD-binding monooxygenase family. FAD serves as cofactor.

It functions in the pathway polyketide biosynthesis. In terms of biological role, FAD-binding monooxygenase; part of the gene cluster A that mediates the biosynthesis of botcinic acid and its botcinin derivatives, acetate-derived polyketides that contribute to virulence when combined with the sesquiterpene botrydial. Botcinic acid and its derivatives have been shown to induce chlorosis and necrosis during host plant infection, but also have antifungal activities. Two polyketide synthases, BOA6 and BOA9, are involved in the biosynthesis of botcinins. BOA6 mediates the formation of the per-methylated tetraketide core by condensation of four units of malonyl-CoA with one unit of acetyl-CoA, which would be methylated in activated methylene groups to yield a bicyclic acid intermediate that could then either be converted to botrylactone derivatives or lose the starter acetate unit through a retro-Claisen type C-C bond cleavage to yield botcinin derivatives. The second polyketide synthase, BOA9, is probably required for the biosynthesis of the tetraketide side chain of botcinins. The methyltransferase (MT) domain within BOA6 is probably responsible for the incorporation of four methyl groups. The trans-enoyl reductase BOA5 might take over the enoyl reductase function of BOA6 that misses an ER domain. The monooxygenases BOA2, BOA3 and BOA4 might be involved in further hydroxylations at C4, C5 and C8, whereas BOA7, close to BOA9, could potentially be involved in the hydroxylation at C4 in the side chain of botcinins. This is FAD-binding monooxygenase BOA2 from Botryotinia fuckeliana (strain B05.10) (Noble rot fungus).